The chain runs to 318 residues: Homoserine O-succinyltransferase (318 aa).

The active-site Acyl-thioester intermediate is the cysteine 142. Substrate contacts are provided by lysine 163 and serine 192. Histidine 235 serves as the catalytic Proton acceptor. Glutamate 237 is an active-site residue. Arginine 249 contacts substrate.

Belongs to the MetA family.

It is found in the cytoplasm. It carries out the reaction L-homoserine + succinyl-CoA = O-succinyl-L-homoserine + CoA. It functions in the pathway amino-acid biosynthesis; L-methionine biosynthesis via de novo pathway; O-succinyl-L-homoserine from L-homoserine: step 1/1. Its function is as follows. Transfers a succinyl group from succinyl-CoA to L-homoserine, forming succinyl-L-homoserine. This Shewanella putrefaciens (strain CN-32 / ATCC BAA-453) protein is Homoserine O-succinyltransferase.